A 363-amino-acid chain; its full sequence is MINRRQRLEFALTLLPYDPETVQLSETQKKVEAIIARLRTDDSFTEEESDDCKVRRIQDANEFADSAMRHIEMSDSGKLSTLETLTLAAEKLLRTQRSPDQDFDDMVQDVEYSQLMRNTIQAVNEARLKLLQQWERSKRKALDLLTIEIEKVQEMDQEPEHKQSHEQDQDQEQSSEPFNAFRDGADEHNTSTPKTNDEDLGLDDDDEDYVPGGEETMGNKRKRIKKPVTSTPNAKRRCPGFEFDLDGESPMVTIGPNGTEVSRISLSAINWDMTGPSITRKLLCEIFDRDTLAHHTLSGKPSPAFRDCARPSKQQLDPLKVADLVYLMTNSLDMTPREVRTAITTKCADENKMLRSRMQRKSK.

Basic and acidic residues predominate over residues 155 to 168; sequence MDQEPEHKQSHEQD. The disordered stretch occupies residues 155-242; sequence MDQEPEHKQS…NAKRRCPGFE (88 aa). Residues 198–209 are compositionally biased toward acidic residues; that stretch reads EDLGLDDDDEDY. Positions 255–354 constitute a BEN domain; it reads GPNGTEVSRI…TKCADENKML (100 aa).

In terms of assembly, the heterotrimeric Elba complex consists of Elba1, Elba2 and Elba3.

The protein localises to the nucleus. In terms of biological role, the heterotrimeric Elba complex is required for chromatin domain boundary function during early embryogenesis. It binds to a 8-bp sequence 5'-CCAATAAG-3' in the Fab-7 insulator or boundary element in the bithorax complex and contributes to its insulator or boundary activity. Elba1 may act as a transcriptional repressor and binds the palindromic sequence 5'-CCAATTGG-3' to mediate transcriptional repression. This Drosophila melanogaster (Fruit fly) protein is Early boundary activity protein 1.